The primary structure comprises 162 residues: RNA pyrophosphohydrolase (162 aa).

Residues 7-149 (KYRPCVGIML…KKEVYKTVIE (143 aa)) enclose the Nudix hydrolase domain. The short motif at 40–61 (GGVDDGEELEQAALRELLEEVG) is the Nudix box element.

This sequence belongs to the Nudix hydrolase family. RppH subfamily. A divalent metal cation is required as a cofactor.

Accelerates the degradation of transcripts by removing pyrophosphate from the 5'-end of triphosphorylated RNA, leading to a more labile monophosphorylated state that can stimulate subsequent ribonuclease cleavage. This chain is RNA pyrophosphohydrolase, found in Wolbachia pipientis wMel.